The sequence spans 148 residues: 3-hydroxyacyl-[acyl-carrier-protein] dehydratase FabZ (148 aa).

His-48 is an active-site residue.

The protein belongs to the thioester dehydratase family. FabZ subfamily.

It localises to the cytoplasm. The enzyme catalyses a (3R)-hydroxyacyl-[ACP] = a (2E)-enoyl-[ACP] + H2O. Its function is as follows. Involved in unsaturated fatty acids biosynthesis. Catalyzes the dehydration of short chain beta-hydroxyacyl-ACPs and long chain saturated and unsaturated beta-hydroxyacyl-ACPs. The sequence is that of 3-hydroxyacyl-[acyl-carrier-protein] dehydratase FabZ from Acinetobacter baylyi (strain ATCC 33305 / BD413 / ADP1).